The chain runs to 281 residues: Homeobox protein Hox-A5 (281 aa).

Disordered regions lie at residues 65–144 (VGNE…PCSS) and 162–183 (PLEEEKPAGSAPTTPQNVSDST). 2 stretches are compositionally biased toward polar residues: residues 68–99 (ERTQGYSPSHSAATTPSVEPVRYTQSANSTGT) and 114–127 (VASSSPVTETQSQH). The span at 132–144 (NSITTPCSTPCSS) shows a compositional bias: low complexity. Residues 172 to 183 (APTTPQNVSDST) are compositionally biased toward polar residues. The Antp-type hexapeptide motif lies at 187 to 192 (IYPWMR). The segment at residues 205-264 (GKRARTAYTRYQTLELEKEFHFNRYLTRRRRIEIAHALCLSERQIKIWFQNRRMKWKKDN) is a DNA-binding region (homeobox).

Belongs to the Antp homeobox family.

The protein resides in the nucleus. Functionally, sequence-specific transcription factor which is part of a developmental regulatory system that provides cells with specific positional identities on the anterior-posterior axis. The protein is Homeobox protein Hox-A5 (hoxa5) of Morone saxatilis (Striped bass).